A 110-amino-acid chain; its full sequence is MPLLHTLGLFALTAVAEIVGCYLPYLWLKQGHSAWLLVPAALSLAVFAWLLTLHPTASGRVYAAYGGVYVSMALLWLWAVDGVRPATTDWAGVGLCLAGMALIMAGPRHG.

4 helical membrane passes run 7-27 (LGLFALTAVAEIVGCYLPYLW), 33-53 (SAWLLVPAALSLAVFAWLLTL), 63-83 (AAYGGVYVSMALLWLWAVDGV), and 86-106 (ATTDWAGVGLCLAGMALIMAG).

This sequence belongs to the UPF0060 family.

Its subcellular location is the cell inner membrane. The sequence is that of UPF0060 membrane protein Bpet0062 from Bordetella petrii (strain ATCC BAA-461 / DSM 12804 / CCUG 43448).